A 469-amino-acid polypeptide reads, in one-letter code: uncharacterized protein (469 aa).

The signal sequence occupies residues 1–19 (MRINFVLLITLILPWFVSG). 7 helical membrane-spanning segments follow: residues 199–219 (IKST…TWLL), 236–256 (AFWV…MVAI), 283–303 (AYTS…PALV), 305–325 (YYVY…FAPL), 338–358 (ILLK…PFFA), 386–406 (IALA…RPLL), and 413–433 (GFQL…AFLF).

The protein resides in the membrane. This is an uncharacterized protein from Schizosaccharomyces pombe (strain 972 / ATCC 24843) (Fission yeast).